Here is a 119-residue protein sequence, read N- to C-terminus: Ribosome-binding factor A (119 aa).

The protein belongs to the RbfA family. Monomer. Binds 30S ribosomal subunits, but not 50S ribosomal subunits or 70S ribosomes.

Its subcellular location is the cytoplasm. One of several proteins that assist in the late maturation steps of the functional core of the 30S ribosomal subunit. Associates with free 30S ribosomal subunits (but not with 30S subunits that are part of 70S ribosomes or polysomes). Required for efficient processing of 16S rRNA. May interact with the 5'-terminal helix region of 16S rRNA. This is Ribosome-binding factor A from Pseudothermotoga lettingae (strain ATCC BAA-301 / DSM 14385 / NBRC 107922 / TMO) (Thermotoga lettingae).